Consider the following 457-residue polypeptide: Cyanidin 3-O-galactoside 2''-O-xylosyltransferase FGGT1 (457 aa).

It belongs to the UDP-glycosyltransferase family. In terms of tissue distribution, expressed in ovaries.

It catalyses the reaction cyanidin 3-O-beta-D-galactoside + UDP-alpha-D-xylose = cyanidin 3-O-[beta-D-xylosyl-(1-&gt;2)-beta-D-galactoside] + UDP + H(+). The protein operates within pigment biosynthesis; anthocyanin biosynthesis. Its function is as follows. Xylosyltransferase involved in anthocyanin biosynthesis by catalyzing the xylosylation of cyanidin 3-O-galactoside to form cyanidin 3-O-[2-O-(-xylosyl)-galactoside]. Required for the accumulation of anthocyanin in red-fleshed kiwifruit varieties. The polypeptide is Cyanidin 3-O-galactoside 2''-O-xylosyltransferase FGGT1 (Actinidia chinensis var. chinensis (Chinese soft-hair kiwi)).